Here is a 335-residue protein sequence, read N- to C-terminus: MDLNAILIILGVIALIILVAHGIWSNRREKSQYFENSKNFTREARIREPQENQQYQTADQSQSDFQRNLLETDNDCFSSESAHNSHQPLYHYSEQSAVQSVDQIKIRLPDSEPNYVMQEQFSPKHTDYASMSIEELEKSIDLDEGINSSSQHLRQELAQISGQSIADDKVNIEEHIFTESSISFVEPQTNTEFQQVVEKTKSGNSSFIMLYVVASENQGFSGLQLTKTLDELGFIFGKKQIYHRHVDLSITSPVLFSVANIEQPGTFDLTNIADFYTVGIALFMQLPSYGNVTANLRMMIRAAKTIAQDLDGVVVTEQQEIFDEQAERDYLARVS.

Over 1 to 4 (MDLN) the chain is Periplasmic. The chain crosses the membrane as a helical span at residues 5–25 (AILIILGVIALIILVAHGIWS). Topologically, residues 26 to 335 (NRREKSQYFE…AERDYLARVS (310 aa)) are cytoplasmic.

The protein belongs to the ZipA family. In terms of assembly, interacts with FtsZ via their C-terminal domains.

Its subcellular location is the cell inner membrane. Functionally, essential cell division protein that stabilizes the FtsZ protofilaments by cross-linking them and that serves as a cytoplasmic membrane anchor for the Z ring. Also required for the recruitment to the septal ring of downstream cell division proteins. The sequence is that of Cell division protein ZipA from Histophilus somni (strain 2336) (Haemophilus somnus).